Reading from the N-terminus, the 301-residue chain is Ribonuclease H2 subunit A (301 aa).

At Met1 the chain carries N-acetylmethionine. The 224-residue stretch at 28-251 (PCVLGVDEAG…AQAILEKEAE (224 aa)) folds into the RNase H type-2 domain. Asp34, Glu35, and Asp142 together coordinate a divalent metal cation. Thr217 carries the phosphothreonine modification. A compositionally biased stretch (acidic residues) spans 255-264 (WEDSEAEEDP). The interval 255–284 (WEDSEAEEDPERPGKITSYFSQGPQTCRPQ) is disordered. Ser258 bears the Phosphoserine mark. The segment covering 272 to 282 (SYFSQGPQTCR) has biased composition (polar residues).

The protein belongs to the RNase HII family. Eukaryotic subfamily. As to quaternary structure, the RNase H2 complex is a heterotrimer composed of the catalytic subunit RNASEH2A and the non-catalytic subunits RNASEH2B and RNASEH2C. Requires Mn(2+) as cofactor. Mg(2+) serves as cofactor.

It is found in the nucleus. The catalysed reaction is Endonucleolytic cleavage to 5'-phosphomonoester.. Catalytic subunit of RNase HII, an endonuclease that specifically degrades the RNA of RNA:DNA hybrids. Participates in DNA replication, possibly by mediating the removal of lagging-strand Okazaki fragment RNA primers during DNA replication. Mediates the excision of single ribonucleotides from DNA:RNA duplexes. The chain is Ribonuclease H2 subunit A (Rnaseh2a) from Mus musculus (Mouse).